Consider the following 107-residue polypeptide: Small ribosomal subunit protein uS15 (107 aa).

The residue at position 27 (Lys27) is an N6-acetyllysine; alternate. Residue Lys27 is modified to N6-succinyllysine; alternate. Lys27 participates in a covalent cross-link: Glycyl lysine isopeptide (Lys-Gly) (interchain with G-Cter in ubiquitin). A Phosphoserine modification is found at Ser30. At Lys34 the chain carries N6-succinyllysine. Tyr38 carries the phosphotyrosine modification. Lys43 is covalently cross-linked (Glycyl lysine isopeptide (Lys-Gly) (interchain with G-Cter in SUMO2)).

Belongs to the universal ribosomal protein uS15 family. Component of the small ribosomal subunit. Part of the small subunit (SSU) processome, composed of more than 70 proteins and the RNA chaperone small nucleolar RNA (snoRNA) U3. Ubiquitinated at Lys-27 by RNF14 and RNF25 in response to ribosome collisions (ribosome stalling).

It is found in the cytoplasm. Its subcellular location is the nucleus. The protein localises to the nucleolus. In terms of biological role, component of the small ribosomal subunit. The ribosome is a large ribonucleoprotein complex responsible for the synthesis of proteins in the cell. Part of the small subunit (SSU) processome, first precursor of the small eukaryotic ribosomal subunit. During the assembly of the SSU processome in the nucleolus, many ribosome biogenesis factors, an RNA chaperone and ribosomal proteins associate with the nascent pre-rRNA and work in concert to generate RNA folding, modifications, rearrangements and cleavage as well as targeted degradation of pre-ribosomal RNA by the RNA exosome. This is Small ribosomal subunit protein uS15 (RPS13) from Sus scrofa (Pig).